The primary structure comprises 559 residues: Inositol-3-phosphate synthase 1 (559 aa).

NAD(+) is bound by residues glycine 67, glycine 68, asparagine 69, asparagine 70, aspartate 141, serine 177, valine 178, glutamine 188, arginine 191, threonine 228, alanine 229, asparagine 230, threonine 231, glycine 278, serine 279, aspartate 303, serine 306, asparagine 337, asparagine 338, aspartate 339, and lysine 352. The residue at position 279 (serine 279) is a Phosphoserine. Serine 357 is subject to Phosphoserine. The NAD(+) site is built by glycine 390, aspartate 391, aspartate 419, and serine 420.

It belongs to the myo-inositol 1-phosphate synthase family. NAD(+) is required as a cofactor.

The protein resides in the cytoplasm. It catalyses the reaction D-glucose 6-phosphate = 1D-myo-inositol 3-phosphate. The protein operates within polyol metabolism; myo-inositol biosynthesis; myo-inositol from D-glucose 6-phosphate: step 1/2. Key enzyme in myo-inositol biosynthesis pathway that catalyzes the conversion of glucose 6-phosphate to 1-myo-inositol 1-phosphate in a NAD-dependent manner. Rate-limiting enzyme in the synthesis of all inositol-containing compounds. The sequence is that of Inositol-3-phosphate synthase 1 (ISYNA1) from Macaca fascicularis (Crab-eating macaque).